The primary structure comprises 208 residues: Large ribosomal subunit protein uL4 (208 aa).

The segment at 45–95 (RQGTHKAKTRSEVRGGGKKPFRQKGTGNARQGSSRSPIHVGGGTIFGPQPH) is disordered. The span at 69-80 (GTGNARQGSSRS) shows a compositional bias: polar residues.

This sequence belongs to the universal ribosomal protein uL4 family. In terms of assembly, part of the 50S ribosomal subunit.

Its function is as follows. One of the primary rRNA binding proteins, this protein initially binds near the 5'-end of the 23S rRNA. It is important during the early stages of 50S assembly. It makes multiple contacts with different domains of the 23S rRNA in the assembled 50S subunit and ribosome. In terms of biological role, forms part of the polypeptide exit tunnel. This is Large ribosomal subunit protein uL4 from Chlorobium chlorochromatii (strain CaD3).